A 396-amino-acid chain; its full sequence is Phosphoglycerate kinase (396 aa).

Residues 21–23 (DFN), R36, 59–62 (HLGR), R118, and R151 each bind substrate. Residues K201, G292, E323, and 349 to 352 (GGDS) each bind ATP.

Belongs to the phosphoglycerate kinase family. In terms of assembly, monomer.

The protein localises to the cytoplasm. The enzyme catalyses (2R)-3-phosphoglycerate + ATP = (2R)-3-phospho-glyceroyl phosphate + ADP. It participates in carbohydrate degradation; glycolysis; pyruvate from D-glyceraldehyde 3-phosphate: step 2/5. The chain is Phosphoglycerate kinase from Leptospira interrogans serogroup Icterohaemorrhagiae serovar copenhageni (strain Fiocruz L1-130).